A 357-amino-acid polypeptide reads, in one-letter code: Membrane-bound lytic murein transglycosylase C (357 aa).

Positions 1–17 (MKLKKFLVLLLIPFLYA) are cleaved as a signal peptide. Cys-18 is lipidated: N-palmitoyl cysteine. The S-diacylglycerol cysteine moiety is linked to residue Cys-18.

This sequence belongs to the transglycosylase Slt family.

It is found in the cell outer membrane. The enzyme catalyses Exolytic cleavage of the (1-&gt;4)-beta-glycosidic linkage between N-acetylmuramic acid (MurNAc) and N-acetylglucosamine (GlcNAc) residues in peptidoglycan, from either the reducing or the non-reducing ends of the peptidoglycan chains, with concomitant formation of a 1,6-anhydrobond in the MurNAc residue.. Murein-degrading enzyme. May play a role in recycling of muropeptides during cell elongation and/or cell division. The chain is Membrane-bound lytic murein transglycosylase C from Mannheimia succiniciproducens (strain KCTC 0769BP / MBEL55E).